A 206-amino-acid polypeptide reads, in one-letter code: Thymidylate kinase (206 aa).

An ATP-binding site is contributed by 7–14; that stretch reads GGEGVGKT.

The protein belongs to the thymidylate kinase family.

It carries out the reaction dTMP + ATP = dTDP + ADP. Phosphorylation of dTMP to form dTDP in both de novo and salvage pathways of dTTP synthesis. This is Thymidylate kinase from Synechococcus sp. (strain JA-2-3B'a(2-13)) (Cyanobacteria bacterium Yellowstone B-Prime).